The primary structure comprises 376 residues: Carbamoyl phosphate synthase small chain (376 aa).

The CPSase stretch occupies residues Met1–Asn183. Ser51, Gly235, and Gly237 together coordinate L-glutamine. Residues Asn187–Asn374 form the Glutamine amidotransferase type-1 domain. Catalysis depends on Cys263, which acts as the Nucleophile. Residues Leu264, Gln267, Asn305, and Phe308 each contribute to the L-glutamine site. Active-site residues include His347 and Glu349.

Belongs to the CarA family. As to quaternary structure, composed of two chains; the small (or glutamine) chain promotes the hydrolysis of glutamine to ammonia, which is used by the large (or ammonia) chain to synthesize carbamoyl phosphate. Tetramer of heterodimers (alpha,beta)4.

It catalyses the reaction hydrogencarbonate + L-glutamine + 2 ATP + H2O = carbamoyl phosphate + L-glutamate + 2 ADP + phosphate + 2 H(+). The catalysed reaction is L-glutamine + H2O = L-glutamate + NH4(+). It functions in the pathway amino-acid biosynthesis; L-arginine biosynthesis; carbamoyl phosphate from bicarbonate: step 1/1. Its pathway is pyrimidine metabolism; UMP biosynthesis via de novo pathway; (S)-dihydroorotate from bicarbonate: step 1/3. In terms of biological role, small subunit of the glutamine-dependent carbamoyl phosphate synthetase (CPSase). CPSase catalyzes the formation of carbamoyl phosphate from the ammonia moiety of glutamine, carbonate, and phosphate donated by ATP, constituting the first step of 2 biosynthetic pathways, one leading to arginine and/or urea and the other to pyrimidine nucleotides. The small subunit (glutamine amidotransferase) binds and cleaves glutamine to supply the large subunit with the substrate ammonia. This chain is Carbamoyl phosphate synthase small chain, found in Wigglesworthia glossinidia brevipalpis.